We begin with the raw amino-acid sequence, 2138 residues long: Non-reducing polyketide synthase rads2 (2138 aa).

The tract at residues 11-249 (LIFGDQTDSW…NPLNIHALQH (239 aa)) is N-terminal acylcarrier protein transacylase (SAT) domain. One can recognise a Ketosynthase family 3 (KS3) domain in the interval 373-804 (SGRIAIVGMA…GGNACMLLED (432 aa)). Residues C549, H684, and H724 each act as for beta-ketoacyl synthase activity in the active site. Residues 901–1184 (VFVFGGQGSH…KGVCTSFVRA (284 aa)) form a malonyl-CoA:ACP transacylase (MAT) domain region. S992 acts as the For acyl/malonyl transferase activity in catalysis. Positions 1291–1437 (AQYVVQESPS…KDVQRLQADW (147 aa)) are N-terminal hotdog fold. The PKS/mFAS DH domain maps to 1291 to 1610 (AQYVVQESPS…FHEISNATLK (320 aa)). The segment at 1303–1607 (KKIQVTFRAS…GLEFHEISNA (305 aa)) is product template (PT) domain. The C-terminal hotdog fold stretch occupies residues 1459–1610 (HGHRFQPDIF…FHEISNATLK (152 aa)). Residues 1618–1666 (SKSVLKPDNAAPLKAPEKKEDATPTAPKKSADPGKEEEEEGDTATPAAV) are disordered. The region spanning 1666 to 1740 (VGEFEVIIQT…DLRRAFAMAP (75 aa)) is the Carrier domain. S1700 carries the O-(pantetheine 4'-phosphoryl)serine modification. Over residues 1740 to 1771 (PSSSSSTSASESVSESLDDSSSTSRSATPSSS) the composition is skewed to low complexity. Disordered stretches follow at residues 1740 to 1781 (PSSS…GFVE) and 1807 to 1828 (QATK…SSPA). Positions 1860 to 2006 (ADGTGSIATY…TRRHLGAMFS (147 aa)) are thioesterase (TE) domain.

It participates in secondary metabolite biosynthesis. In terms of biological role, non-reducing polyketide synthase; part of the gene cluster that mediates the biosynthesis of radicicol, a resorcylic acid lactone (RAL) that irreversibly inhibits the HSP90 molecular chaperone, an important target for cancer chemotherapy. The cluster encodes only two apparent post-PKS enzymes, a cytochrome P450 monooxygenase (radP) and a non-heme halogenase (radH) that introduce the epoxide and the chlorine, respectively. If this cluster includes all the genes required for radicicol biosynthesis, the remaining structural features of radicicol are presumably generated by the PKSs rads1 and rads2. The C-2' ketone could arise if the R-PKS rads1 and NR-PKS rads2 each carry out four iterations, in contrast to the five iteration-three iteration split for the hypothemycin PKSs. The origin of the cis 5',6' double bond is not known. The radicicol R-PKS rads1 ER domain may catalyze either double bond isomerization or reduction in the third iteration. The chain is Non-reducing polyketide synthase rads2 from Floropilus chiversii (Chaetomium chiversii).